We begin with the raw amino-acid sequence, 358 residues long: Peptide chain release factor 1 (358 aa).

Position 233 is an N5-methylglutamine (Gln-233).

It belongs to the prokaryotic/mitochondrial release factor family. Methylated by PrmC. Methylation increases the termination efficiency of RF1.

Its subcellular location is the cytoplasm. Its function is as follows. Peptide chain release factor 1 directs the termination of translation in response to the peptide chain termination codons UAG and UAA. This Staphylococcus aureus (strain MSSA476) protein is Peptide chain release factor 1.